A 315-amino-acid polypeptide reads, in one-letter code: Triosephosphate isomerase, chloroplastic (315 aa).

A chloroplast-targeting transit peptide spans 1 to 60 (MAATSLTAPPSFSGLRRISPKLDAAAVSSHQSFFHRVNSSTRLVSSSSSSHRSPRGVVAM). The substrate site is built by Asn-71 and Lys-73. The active-site Electrophile is His-155. Ser-178 carries the post-translational modification Phosphoserine. The active-site Proton acceptor is the Glu-225.

The protein belongs to the triosephosphate isomerase family. In terms of assembly, homodimer.

It localises to the plastid. It is found in the chloroplast. It carries out the reaction D-glyceraldehyde 3-phosphate = dihydroxyacetone phosphate. It functions in the pathway carbohydrate biosynthesis; Calvin cycle. This chain is Triosephosphate isomerase, chloroplastic (TIM), found in Arabidopsis thaliana (Mouse-ear cress).